The chain runs to 122 residues: Small ribosomal subunit protein uS13 (122 aa).

The segment at 94 to 122 (KGLPVRGQRTHTNARTRKGPRRAIAGKKK) is disordered.

The protein belongs to the universal ribosomal protein uS13 family. As to quaternary structure, part of the 30S ribosomal subunit. Forms a loose heterodimer with protein S19. Forms two bridges to the 50S subunit in the 70S ribosome.

Its function is as follows. Located at the top of the head of the 30S subunit, it contacts several helices of the 16S rRNA. In the 70S ribosome it contacts the 23S rRNA (bridge B1a) and protein L5 of the 50S subunit (bridge B1b), connecting the 2 subunits; these bridges are implicated in subunit movement. Contacts the tRNAs in the A and P-sites. This chain is Small ribosomal subunit protein uS13, found in Syntrophus aciditrophicus (strain SB).